An 80-amino-acid polypeptide reads, in one-letter code: Tripartite terminase subunit 2 (80 aa).

The protein belongs to the herpesviridae TRM2 protein family. In terms of assembly, associates with TRM1 and TRM3 to form the tripartite terminase complex.

It localises to the host nucleus. Component of the molecular motor that translocates viral genomic DNA in empty capsid during DNA packaging. Forms a tripartite terminase complex together with TRM1 and TRM3 in the host cytoplasm. Once the complex reaches the host nucleus, it interacts with the capsid portal vertex. This portal forms a ring in which genomic DNA is translocated into the capsid. In Homo sapiens (Human), this protein is Tripartite terminase subunit 2.